Here is a 147-residue protein sequence, read N- to C-terminus: Large ribosomal subunit protein uL15 (147 aa).

Residues 1–47 (MKLHELKPAEGAVRAKRRLGRGTATGQGKTAGRGQKGQWSRSGGGVR) are disordered. A compositionally biased stretch (gly residues) spans 23-35 (TATGQGKTAGRGQ).

Belongs to the universal ribosomal protein uL15 family. Part of the 50S ribosomal subunit.

Binds to the 23S rRNA. This is Large ribosomal subunit protein uL15 from Clostridioides difficile (strain 630) (Peptoclostridium difficile).